The primary structure comprises 1441 residues: Envelopment polyprotein (1441 aa).

An N-terminal signal peptide occupies residues 1-13; that stretch reads MIRMLVLIVVTAA. Topologically, residues 14 to 200 are lumenal; that stretch reads SPVYQRCFQD…GSIANSICQN (187 aa). N57 is a glycosylation site (N-linked (GlcNAc...) asparagine; by host). A helical transmembrane segment spans residues 201–221; the sequence is IEIIILVTLTLLIFILLSILS. Residues 222–305 are Cytoplasmic-facing; the sequence is KTYICYLLMP…RAARVMCKSK (84 aa). A helical transmembrane segment spans residues 306-326; the sequence is GPASILSIITAVLVLTFVTPI. The Lumenal segment spans residues 327–365; the sequence is NSMVLGESKETFELEELPDDMLEMALRINSYYFTCILNY. A helical membrane pass occupies residues 366–386; the sequence is AVSWGLIIAGLLVGLIFKKYQ. The Cytoplasmic segment spans residues 387-452; it reads HRFLNIYAMY…LVQYKAKWMM (66 aa). The chain crosses the membrane as a helical span at residues 453–473; it reads NFLIIYIFLILIKDSAIVGQA. At 474–1395 the chain is on the lumenal side; the sequence is TGTDFTTCLE…EPFKNLFGSY (922 aa). N-linked (GlcNAc...) asparagine; by host glycans are attached at residues N490 and N1177. The helical transmembrane segment at 1396–1416 threads the bilayer; it reads IGIFYTFIISIIALLVIIYVL. At 1417 to 1441 the chain is on the cytoplasmic side; that stretch reads LPICFKLRDTLRKHDDAYKREMKIR.

Belongs to the orthobunyavirus envelope glycoprotein family. Glycoprotein C and Glycoprotein N interact with each other. In terms of processing, specific enzymatic cleavages in vivo yield mature proteins including nonstructural protein NSm, glycoprotein C, and glycoprotein N.

The protein resides in the virion membrane. Its subcellular location is the host Golgi apparatus membrane. The protein localises to the host endoplasmic reticulum membrane. Functionally, glycoprotein C and Glycoprotein N interact with each other and are present at the surface of the virion. They are able to attach the virion to a cell receptor and to promote fusion of membranes after endocytosis of the virion. The protein is Envelopment polyprotein (GP) of Bunyavirus La Crosse.